A 234-amino-acid polypeptide reads, in one-letter code: Leucyl/phenylalanyl-tRNA--protein transferase (234 aa).

The protein belongs to the L/F-transferase family.

It localises to the cytoplasm. It carries out the reaction N-terminal L-lysyl-[protein] + L-leucyl-tRNA(Leu) = N-terminal L-leucyl-L-lysyl-[protein] + tRNA(Leu) + H(+). The enzyme catalyses N-terminal L-arginyl-[protein] + L-leucyl-tRNA(Leu) = N-terminal L-leucyl-L-arginyl-[protein] + tRNA(Leu) + H(+). The catalysed reaction is L-phenylalanyl-tRNA(Phe) + an N-terminal L-alpha-aminoacyl-[protein] = an N-terminal L-phenylalanyl-L-alpha-aminoacyl-[protein] + tRNA(Phe). Functions in the N-end rule pathway of protein degradation where it conjugates Leu, Phe and, less efficiently, Met from aminoacyl-tRNAs to the N-termini of proteins containing an N-terminal arginine or lysine. This chain is Leucyl/phenylalanyl-tRNA--protein transferase, found in Salmonella paratyphi A (strain ATCC 9150 / SARB42).